The sequence spans 212 residues: Transmembrane emp24 domain-containing protein p24delta4 (212 aa).

Positions 1–25 (MKKKMIPTTILLSALIFSLSPICEA) are cleaved as a signal peptide. The Lumenal segment spans residues 26-179 (VWLTVPHTGS…RIVSEKTNSR (154 aa)). Residues 35–147 (SKCVSEEIQS…IEGVELEFKK (113 aa)) enclose the GOLD domain. Asparagine 82 carries N-linked (GlcNAc...) asparagine glycosylation. A coiled-coil region spans residues 133-155 (ARKEKIEGVELEFKKLEGAVEAI). Residues arginine 165 and arginine 170 each carry the omega-N-methylated arginine modification. The helical transmembrane segment at 180-200 (VAWYSIMSLGICIVVSGLQIL) threads the bilayer. Residues 201–212 (YLKQYFEKKKLI) are Cytoplasmic-facing. Residues 205-206 (YF) carry the COPII vesicle coat-binding motif. Positions 205–212 (YFEKKKLI) match the COPI vesicle coat-binding motif.

The protein belongs to the EMP24/GP25L family. As to quaternary structure, probably oligomerizes with other members of the EMP24/GP25L family. Associates with the COPI vesicle coat (coatomer). Associates with the COPII vesicle coat (coatomer).

The protein resides in the endoplasmic reticulum membrane. It localises to the golgi apparatus membrane. Its function is as follows. Involved in vesicular protein trafficking. Mainly functions in the early secretory pathway. Required for trafficking GLL23, a component of the PYK10 complex. May act as a receptor facilitating its packing into COPII carriers and export from the endoplasmic reticulum. This is Transmembrane emp24 domain-containing protein p24delta4 (CYB) from Arabidopsis thaliana (Mouse-ear cress).